A 409-amino-acid chain; its full sequence is MNVSAIVVEYNPMHNGHLYHIEKTKKLTNCDALVCIMSGNFVQRGFPSILDKWTKANMAISNGVDLVIELPTLYSLSSAEFFSFGAVSILDSLNIINSICFGSEIGNINALQDIATTLLEEPLEYKILLKNYLDKGISFAKARNLALVELNRDNKIMSENISKILSLSNNILGIEYLKSLLLLNSSIKPFTITREGADYKDENLHEEYSSASSIRKYLKENKNINILKDFLPLEGFLEFKRLITKGYNFSMEDSMINYIRYKYISGYKNLHNLIDVSEGLDNRIYKSLEKNFTYDSLVGEIKSKRYAYSRIGRILCQYFIGFENYDLNSLLKSTPNYMRVLASNERGLKVLKEVKKHSSINIYTKLPKNTNTLLSLDIKATNAYSLLNNNIRFNEDYFRSPTIIKNTIY.

Residues 7 to 20 (VVEY…HLYH), glycine 102, asparagine 169, and arginine 194 each bind ATP.

The protein belongs to the TmcAL family.

It is found in the cytoplasm. It catalyses the reaction cytidine(34) in elongator tRNA(Met) + acetate + ATP = N(4)-acetylcytidine(34) in elongator tRNA(Met) + AMP + diphosphate. Catalyzes the formation of N(4)-acetylcytidine (ac(4)C) at the wobble position of elongator tRNA(Met), using acetate and ATP as substrates. First activates an acetate ion to form acetyladenylate (Ac-AMP) and then transfers the acetyl group to tRNA to form ac(4)C34. The polypeptide is tRNA(Met) cytidine acetate ligase (Clostridium botulinum (strain Langeland / NCTC 10281 / Type F)).